The primary structure comprises 592 residues: Malic enzyme, hydrogenosomal (592 aa).

Residues 1–27 (MLAPIQTIARPVSSILPATGALAAKRT) constitute a hydrogenosome transit peptide. Tyrosine 134 serves as the catalytic Proton donor. 182 to 205 (VTDGSRILGLGDLGAGGMQIPIGK) is an NADP(+) binding site. Arginine 187 provides a ligand contact to NAD(+). The Proton acceptor role is filled by lysine 205. Residues glutamate 276, aspartate 277, and aspartate 300 each contribute to the a divalent metal cation site. Residue aspartate 300 coordinates NAD(+). 335–352 (GAGSSGVGVCETIVDCIV) provides a ligand contact to NADP(+). Position 443 (asparagine 443) interacts with NAD(+).

Belongs to the malic enzymes family. It depends on Mg(2+) as a cofactor. The cofactor is Mn(2+).

It is found in the hydrogenosome. The enzyme catalyses (S)-malate + NADP(+) = pyruvate + CO2 + NADPH. The catalysed reaction is oxaloacetate + H(+) = pyruvate + CO2. The sequence is that of Malic enzyme, hydrogenosomal from Neocallimastix frontalis (Rumen fungus).